A 741-amino-acid polypeptide reads, in one-letter code: MNAPDKTGTDRRAVPAAVDLDALIRAEHRDPFSILGPHDDGKGGQYVRAYLPAALSVRLLARDDGRELAELHMSDVPGFFVGHLEQPQPYLLKINWAGGEQITEDPYSYGPLLGEMDLYLFAEGNHRDLSSCLGAQVTSVDGVEGVRFAVWAPNARRVSVVGSFNGWDGRRHPMRLRHPTGVWEIFVPRLQPGEVYKYEILGAHGILPLKSDPMALATTLPPDTASKISAPLKFEWHDQDWLQSRAGRHDVAAPLSIYELHAGSWQMEQNDEGQWRQYNWRELADRLIPYVKELGFTHIELMPIMEHPFGGSWGYQLLAQFAPTARYGSPEDFAAFVDACHQAEIGVILDWVPAHFPTDTHGLAQFDGTALYEYADPKEGFHQDWDTLIYNLGRTEVHGFMLASALHWLKHYHIDGLRVDAVASMLYRDYSRKAGEWVPNRFGGRENLEAIDFLRHLNDVVALEAPGTMVIAEESTAWPGVSESTQKGGLGFNYKWNMGWMHDSLQYMEEDPINREHHHGKLSFSLVYAWSERFVLPISHDEVVHGKHSLIDKMPGDRWQKFANLRAYLAFMWTHPGKKLLFMGCEFGQWREWNHDEQLDWYLMQYAEHVGVKKLVGDLNRIYREEKALHQRDADPTGFQWLIGDDKSNSVFAYLRWSNDGEPLLVVANMTPVPREGYRVGVPLQGAWTELLNSDAETYAGSNIGNGGEVISEDEPVHGMSASLTLNLPPLAVLIFKPKKG.

D420 acts as the Nucleophile in catalysis. The Proton donor role is filled by E473.

Belongs to the glycosyl hydrolase 13 family. GlgB subfamily. In terms of assembly, monomer.

The catalysed reaction is Transfers a segment of a (1-&gt;4)-alpha-D-glucan chain to a primary hydroxy group in a similar glucan chain.. Its pathway is glycan biosynthesis; glycogen biosynthesis. In terms of biological role, catalyzes the formation of the alpha-1,6-glucosidic linkages in glycogen by scission of a 1,4-alpha-linked oligosaccharide from growing alpha-1,4-glucan chains and the subsequent attachment of the oligosaccharide to the alpha-1,6 position. The polypeptide is 1,4-alpha-glucan branching enzyme GlgB (Pseudomonas syringae pv. tomato (strain ATCC BAA-871 / DC3000)).